Reading from the N-terminus, the 541-residue chain is Anthranilate synthase component 1 (541 aa).

L-tryptophan is bound by residues Ser61 and 311–313; that span reads PYM. 348 to 349 is a chorismate binding site; it reads GT. Residue Glu381 coordinates Mg(2+). Residues Tyr469, Arg489, 503 to 505, and Gly505 each bind chorismate; that span reads GAG. Glu518 provides a ligand contact to Mg(2+).

This sequence belongs to the anthranilate synthase component I family. As to quaternary structure, heterotetramer consisting of two non-identical subunits: a beta subunit (TrpG) and a large alpha subunit (TrpE). The cofactor is Mg(2+).

The enzyme catalyses chorismate + L-glutamine = anthranilate + pyruvate + L-glutamate + H(+). The protein operates within amino-acid biosynthesis; L-tryptophan biosynthesis; L-tryptophan from chorismate: step 1/5. Feedback inhibited by tryptophan. Part of a heterotetrameric complex that catalyzes the two-step biosynthesis of anthranilate, an intermediate in the biosynthesis of L-tryptophan. In the first step, the glutamine-binding beta subunit (TrpG) of anthranilate synthase (AS) provides the glutamine amidotransferase activity which generates ammonia as a substrate that, along with chorismate, is used in the second step, catalyzed by the large alpha subunit of AS (TrpE) to produce anthranilate. In the absence of TrpG, TrpE can synthesize anthranilate directly from chorismate and high concentrations of ammonia. The sequence is that of Anthranilate synthase component 1 (trpE) from Vibrio parahaemolyticus serotype O3:K6 (strain RIMD 2210633).